A 244-amino-acid polypeptide reads, in one-letter code: Ribonuclease HII (244 aa).

Residues 23–236 enclose the RNase H type-2 domain; that stretch reads KIILGLDEAG…SKKLLKEFEE (214 aa). 3 residues coordinate a divalent metal cation: aspartate 29, glutamate 30, and aspartate 130.

It belongs to the RNase HII family. Mn(2+) serves as cofactor. The cofactor is Mg(2+).

It localises to the cytoplasm. It carries out the reaction Endonucleolytic cleavage to 5'-phosphomonoester.. Its function is as follows. Endonuclease that specifically degrades the RNA of RNA-DNA hybrids. This is Ribonuclease HII from Methanococcus vannielii (strain ATCC 35089 / DSM 1224 / JCM 13029 / OCM 148 / SB).